The primary structure comprises 158 residues: 3-dehydroquinate dehydratase (158 aa).

Tyr24 functions as the Proton acceptor in the catalytic mechanism. Residues Asn75, His81, and Asp88 each contribute to the substrate site. His101 (proton donor) is an active-site residue. Substrate is bound by residues 102-103 (LS) and Arg112.

Belongs to the type-II 3-dehydroquinase family. As to quaternary structure, homododecamer.

It catalyses the reaction 3-dehydroquinate = 3-dehydroshikimate + H2O. The protein operates within metabolic intermediate biosynthesis; chorismate biosynthesis; chorismate from D-erythrose 4-phosphate and phosphoenolpyruvate: step 3/7. In terms of biological role, catalyzes a trans-dehydration via an enolate intermediate. This Bartonella bacilliformis (strain ATCC 35685 / KC583 / Herrer 020/F12,63) protein is 3-dehydroquinate dehydratase.